A 436-amino-acid polypeptide reads, in one-letter code: UPF0229 protein Meso_0256 (436 aa).

Residues 53-110 (PMPARGTSEPTFRPDRSSGERGYILPGNKEFAPGDRLPKPGASGGEGGTGAGRGGSDD) are disordered. The span at 94–106 (ASGGEGGTGAGRG) shows a compositional bias: gly residues.

This sequence belongs to the UPF0229 family.

This chain is UPF0229 protein Meso_0256, found in Chelativorans sp. (strain BNC1).